Reading from the N-terminus, the 255-residue chain is Gene 54 protein (255 aa).

The polypeptide is Gene 54 protein (54) (Mycobacterium (Mycobacteriophage L5)).